A 263-amino-acid chain; its full sequence is Tryptophan synthase alpha chain (263 aa).

Catalysis depends on proton acceptor residues E50 and D61.

Belongs to the TrpA family. As to quaternary structure, tetramer of two alpha and two beta chains.

It catalyses the reaction (1S,2R)-1-C-(indol-3-yl)glycerol 3-phosphate + L-serine = D-glyceraldehyde 3-phosphate + L-tryptophan + H2O. It functions in the pathway amino-acid biosynthesis; L-tryptophan biosynthesis; L-tryptophan from chorismate: step 5/5. In terms of biological role, the alpha subunit is responsible for the aldol cleavage of indoleglycerol phosphate to indole and glyceraldehyde 3-phosphate. The chain is Tryptophan synthase alpha chain from Clostridium acetobutylicum (strain ATCC 824 / DSM 792 / JCM 1419 / IAM 19013 / LMG 5710 / NBRC 13948 / NRRL B-527 / VKM B-1787 / 2291 / W).